A 401-amino-acid polypeptide reads, in one-letter code: Tryptophan synthase beta chain (401 aa).

Position 91 is an N6-(pyridoxal phosphate)lysine (Lys-91).

It belongs to the TrpB family. In terms of assembly, tetramer of two alpha and two beta chains. The cofactor is pyridoxal 5'-phosphate.

The catalysed reaction is (1S,2R)-1-C-(indol-3-yl)glycerol 3-phosphate + L-serine = D-glyceraldehyde 3-phosphate + L-tryptophan + H2O. The protein operates within amino-acid biosynthesis; L-tryptophan biosynthesis; L-tryptophan from chorismate: step 5/5. The beta subunit is responsible for the synthesis of L-tryptophan from indole and L-serine. This chain is Tryptophan synthase beta chain, found in Lactococcus lactis subsp. cremoris (strain MG1363).